The primary structure comprises 360 residues: Phosphoserine aminotransferase (360 aa).

Position 42 (Arg42) interacts with L-glutamate. Pyridoxal 5'-phosphate-binding residues include Trp102, Thr152, Asp171, and Gln194. N6-(pyridoxal phosphate)lysine is present on Lys195. Residue 237 to 238 (NT) coordinates pyridoxal 5'-phosphate.

It belongs to the class-V pyridoxal-phosphate-dependent aminotransferase family. SerC subfamily. Homodimer. Pyridoxal 5'-phosphate is required as a cofactor.

Its subcellular location is the cytoplasm. The enzyme catalyses O-phospho-L-serine + 2-oxoglutarate = 3-phosphooxypyruvate + L-glutamate. The catalysed reaction is 4-(phosphooxy)-L-threonine + 2-oxoglutarate = (R)-3-hydroxy-2-oxo-4-phosphooxybutanoate + L-glutamate. It participates in amino-acid biosynthesis; L-serine biosynthesis; L-serine from 3-phospho-D-glycerate: step 2/3. The protein operates within cofactor biosynthesis; pyridoxine 5'-phosphate biosynthesis; pyridoxine 5'-phosphate from D-erythrose 4-phosphate: step 3/5. Its function is as follows. Catalyzes the reversible conversion of 3-phosphohydroxypyruvate to phosphoserine and of 3-hydroxy-2-oxo-4-phosphonooxybutanoate to phosphohydroxythreonine. This is Phosphoserine aminotransferase from Coxiella burnetii (strain RSA 493 / Nine Mile phase I).